Consider the following 327-residue polypeptide: uncharacterized protein (327 aa).

Residues 12-79 form the S4 RNA-binding domain; sequence KRLDEFLAKE…LKKELDLEIE (68 aa). Aspartate 136 is an active-site residue.

The protein belongs to the pseudouridine synthase RluA family.

It carries out the reaction a uridine in RNA = a pseudouridine in RNA. This is an uncharacterized protein from Helicobacter pylori (strain ATCC 700392 / 26695) (Campylobacter pylori).